We begin with the raw amino-acid sequence, 208 residues long: Uracil phosphoribosyltransferase (208 aa).

Residues R78, R103, and 130–138 each bind 5-phospho-alpha-D-ribose 1-diphosphate; that span reads DPMLATGGS. Uracil is bound by residues I193 and 198-200; that span reads GDA. Position 199 (D199) interacts with 5-phospho-alpha-D-ribose 1-diphosphate.

This sequence belongs to the UPRTase family. It depends on Mg(2+) as a cofactor.

It carries out the reaction UMP + diphosphate = 5-phospho-alpha-D-ribose 1-diphosphate + uracil. It functions in the pathway pyrimidine metabolism; UMP biosynthesis via salvage pathway; UMP from uracil: step 1/1. Its activity is regulated as follows. Allosterically activated by GTP. Catalyzes the conversion of uracil and 5-phospho-alpha-D-ribose 1-diphosphate (PRPP) to UMP and diphosphate. This is Uracil phosphoribosyltransferase from Salmonella agona (strain SL483).